The sequence spans 96 residues: uncharacterized protein (96 aa).

Transmembrane regions (helical) follow at residues F2–F22, A38–L58, and L68–V88.

It is found in the membrane. This is an uncharacterized protein from Schizosaccharomyces pombe (strain 972 / ATCC 24843) (Fission yeast).